Consider the following 366-residue polypeptide: Inactive PGL/p-HBAD biosynthesis glycosyltransferase Mb2982c (366 aa).

Disordered regions lie at residues 1–23 and 295–366; these read MEET…PNAA and DGDR…HGGP. Positions 295–311 are enriched in basic and acidic residues; sequence DGDRGHRWPEPPEERAG.

It belongs to the UDP-glycosyltransferase family.

The polypeptide is Inactive PGL/p-HBAD biosynthesis glycosyltransferase Mb2982c (Mycobacterium bovis (strain ATCC BAA-935 / AF2122/97)).